Consider the following 249-residue polypeptide: 5-oxoprolinase subunit A (249 aa).

It belongs to the LamB/PxpA family. As to quaternary structure, forms a complex composed of PxpA, PxpB and PxpC.

The catalysed reaction is 5-oxo-L-proline + ATP + 2 H2O = L-glutamate + ADP + phosphate + H(+). Its function is as follows. Catalyzes the cleavage of 5-oxoproline to form L-glutamate coupled to the hydrolysis of ATP to ADP and inorganic phosphate. The protein is 5-oxoprolinase subunit A of Limosilactobacillus fermentum (strain NBRC 3956 / LMG 18251) (Lactobacillus fermentum).